Here is a 230-residue protein sequence, read N- to C-terminus: Aspartate and serine-rich protein (230 aa).

3 N-linked (GlcNAc...) asparagine glycosylation sites follow: asparagine 17, asparagine 132, and asparagine 139. Positions 112 to 230 are disordered; the sequence is LNGGATAGGV…DSDSNDTDSD (119 aa). Residues 126-140 show a composition bias toward acidic residues; that stretch reads DTDESSNDTDEDSND. Positions 141–161 are enriched in basic and acidic residues; sequence SDSKDTDSDSKDTDSDSKDSD. Asparagine 163 and asparagine 170 each carry an N-linked (GlcNAc...) asparagine glycan. Residues 173 to 223 show a composition bias toward basic and acidic residues; sequence DSKDTDSDSKDSDSKDTDSDSKDTDSDSKDSDSKDTDSDSKDTDSDSKDSD. An N-linked (GlcNAc...) asparagine glycan is attached at asparagine 225.

Component of the acid-insoluble organic matrix of calcified layers of the shell (at protein level).

The protein resides in the secreted. The chain is Aspartate and serine-rich protein from Lottia gigantea (Giant owl limpet).